Reading from the N-terminus, the 396-residue chain is MLRWQTAGESHGEALVAMIEGMPSGVRVTSQDIRDALARRRLGYGRGARMKFEQDQVRLLTGVRFGSTLGSPIAIEIGNTEWPKWTEVMSADPLDHELAREGRNAPLSRPRPGHADLTGMRKYGFDDARPVLERSSARETASRVALGEVAALFLEQVAGIRTVSHVISIGGAGVESDNTPLPGPDDVAALDASPVRTLDKDAEERMVARIDEAKAKADTLGGVIEVIAYGVPAGIGTYVESDRRLDAALAAAVMGIQAIKGVEIGDGFLEAGRPGSMAHDEMVPGDDGCIARLSNRAGGIEGGMSNGQPIRVRAAMKPIPSIPRALRTVDITTGEAAQAINQRSDSTAVPAAAVVAEAMVRLTLAQHLLEKFGGDSIEETRRNIEGYLASWPEHMR.

Positions 40 and 46 each coordinate NADP(+). Residues 134 to 136, 257 to 258, G302, 317 to 321, and R343 contribute to the FMN site; these read RSS, QA, and KPIPS.

It belongs to the chorismate synthase family. In terms of assembly, homotetramer. It depends on FMNH2 as a cofactor.

It carries out the reaction 5-O-(1-carboxyvinyl)-3-phosphoshikimate = chorismate + phosphate. Its pathway is metabolic intermediate biosynthesis; chorismate biosynthesis; chorismate from D-erythrose 4-phosphate and phosphoenolpyruvate: step 7/7. Functionally, catalyzes the anti-1,4-elimination of the C-3 phosphate and the C-6 proR hydrogen from 5-enolpyruvylshikimate-3-phosphate (EPSP) to yield chorismate, which is the branch point compound that serves as the starting substrate for the three terminal pathways of aromatic amino acid biosynthesis. This reaction introduces a second double bond into the aromatic ring system. The chain is Chorismate synthase from Bifidobacterium animalis subsp. lactis (strain AD011).